The sequence spans 476 residues: 3-isopropylmalate dehydratase large subunit (476 aa).

The [4Fe-4S] cluster site is built by Cys353, Cys413, and Cys416.

It belongs to the aconitase/IPM isomerase family. LeuC type 1 subfamily. As to quaternary structure, heterodimer of LeuC and LeuD. [4Fe-4S] cluster is required as a cofactor.

It carries out the reaction (2R,3S)-3-isopropylmalate = (2S)-2-isopropylmalate. The protein operates within amino-acid biosynthesis; L-leucine biosynthesis; L-leucine from 3-methyl-2-oxobutanoate: step 2/4. Its function is as follows. Catalyzes the isomerization between 2-isopropylmalate and 3-isopropylmalate, via the formation of 2-isopropylmaleate. This Yersinia pseudotuberculosis serotype IB (strain PB1/+) protein is 3-isopropylmalate dehydratase large subunit.